We begin with the raw amino-acid sequence, 431 residues long: MRTVVWQSLSEEQQDAILERPAIAEGANITAAVADVIAKVRTQGDAALLELTEKFDRVKPESIRVPSKEINAASERLSAEMKQALEQAYSNIAKFHKAQKPQPIKVETQPGVMCEQVTRPIQKVGLYIPGGSAPLPSTVLMLGVPAKIAGCRKVVLCSPPPIADEILYVAKLCGIDEVYNVGGGQAVAAMAYGTKSVSKVDKIFGPGNAYVTEAKRQVSNDFRGAAIDMPAGPSEVLVIADETADPDFIAADLLSQAEHGPDSQVVLVTPSPIVADQVTDAVQRQLKALSRADIAQKALASSLIIISESITQAVSISNYYGPEHLIVQTKNPRELLPLLDNAGSIFLGDWSPESAGDYASGTNHVLPTYGYTRTYSSLGLADFSKRMTVQELSAEGLQNLAPTVVTMAEAEGLDAHKRAVTIRVEKLTQNR.

3 residues coordinate NAD(+): tyrosine 127, glutamine 185, and asparagine 208. Substrate contacts are provided by serine 234, glutamine 256, and histidine 259. Glutamine 256 and histidine 259 together coordinate Zn(2+). Residues glutamate 323 and histidine 324 each act as proton acceptor in the active site. The substrate site is built by histidine 324, aspartate 357, glutamate 411, and histidine 416. Aspartate 357 is a binding site for Zn(2+). Histidine 416 contributes to the Zn(2+) binding site.

It belongs to the histidinol dehydrogenase family. Zn(2+) serves as cofactor.

It carries out the reaction L-histidinol + 2 NAD(+) + H2O = L-histidine + 2 NADH + 3 H(+). The protein operates within amino-acid biosynthesis; L-histidine biosynthesis; L-histidine from 5-phospho-alpha-D-ribose 1-diphosphate: step 9/9. Functionally, catalyzes the sequential NAD-dependent oxidations of L-histidinol to L-histidinaldehyde and then to L-histidine. This Vibrio parahaemolyticus serotype O3:K6 (strain RIMD 2210633) protein is Histidinol dehydrogenase.